The chain runs to 59 residues: Large ribosomal subunit protein uL30 (59 aa).

Belongs to the universal ribosomal protein uL30 family. As to quaternary structure, part of the 50S ribosomal subunit.

The polypeptide is Large ribosomal subunit protein uL30 (Buchnera aphidicola subsp. Schizaphis graminum (strain Sg)).